The following is a 114-amino-acid chain: Large ribosomal subunit protein bL20 (114 aa).

The protein belongs to the bacterial ribosomal protein bL20 family.

In terms of biological role, binds directly to 23S ribosomal RNA and is necessary for the in vitro assembly process of the 50S ribosomal subunit. It is not involved in the protein synthesizing functions of that subunit. The polypeptide is Large ribosomal subunit protein bL20 (Parabacteroides distasonis (strain ATCC 8503 / DSM 20701 / CIP 104284 / JCM 5825 / NCTC 11152)).